The primary structure comprises 109 residues: Peptide chaperone MftB (109 aa).

It belongs to the peptide chaperone MftB family.

Peptide chaperone involved in the biosynthesis of the enzyme cofactor mycofactocin (MFT). Binds MftA and MftC with high affinity, and is essential for MftC activity on MftA, likely via the formation of a ternary complex. The protein is Peptide chaperone MftB of Mycobacterium tuberculosis (strain ATCC 25618 / H37Rv).